A 37-amino-acid chain; its full sequence is Large ribosomal subunit protein bL36c (37 aa).

Belongs to the bacterial ribosomal protein bL36 family.

Its subcellular location is the plastid. It is found in the chloroplast. The sequence is that of Large ribosomal subunit protein bL36c from Cycas taitungensis (Prince sago).